We begin with the raw amino-acid sequence, 170 residues long: ATP synthase subunit b (170 aa).

A helical transmembrane segment spans residues 15–37; it reads GDILFQLLAMLILLALLKKYALG.

It belongs to the ATPase B chain family. F-type ATPases have 2 components, F(1) - the catalytic core - and F(0) - the membrane proton channel. F(1) has five subunits: alpha(3), beta(3), gamma(1), delta(1), epsilon(1). F(0) has three main subunits: a(1), b(2) and c(10-14). The alpha and beta chains form an alternating ring which encloses part of the gamma chain. F(1) is attached to F(0) by a central stalk formed by the gamma and epsilon chains, while a peripheral stalk is formed by the delta and b chains. The F(1)F(0) complex interacts with SpoIIIJ and YqjG; YqgA is found in the same complex.

Its subcellular location is the cell membrane. Functionally, f(1)F(0) ATP synthase produces ATP from ADP in the presence of a proton or sodium gradient. F-type ATPases consist of two structural domains, F(1) containing the extramembraneous catalytic core and F(0) containing the membrane proton channel, linked together by a central stalk and a peripheral stalk. During catalysis, ATP synthesis in the catalytic domain of F(1) is coupled via a rotary mechanism of the central stalk subunits to proton translocation. Its function is as follows. Component of the F(0) channel, it forms part of the peripheral stalk, linking F(1) to F(0). This is ATP synthase subunit b from Bacillus subtilis (strain 168).